A 222-amino-acid polypeptide reads, in one-letter code: Thymidylate kinase (222 aa).

ATP contacts are provided by residues 29–34 and Arg-111; that span reads RVGKST. Residues 146 to 170 are LID; it reads LSMSSEDATKRGEYGGERYEKLEFQ.

The protein belongs to the thymidylate kinase family. In terms of assembly, homodimer. It depends on Mg(2+) as a cofactor.

It carries out the reaction dTMP + ATP = dTDP + ADP. It participates in pyrimidine metabolism; dTTP biosynthesis. Functionally, catalyzes the phosphorylation of thymidine monophosphate (dTMP) to thymidine diphosphate (dTDP), the immediate precursor for the DNA building block dTTP, with ATP as the preferred phosphoryl donor in the presence of Mg(2+). The polypeptide is Thymidylate kinase (dtymk) (Dictyostelium discoideum (Social amoeba)).